The chain runs to 107 residues: MVNSQILILFILSLTITIVMCQTFTYSHGWTNGKRSTSLEELANRNAIQSDNVFANCELQKLRLLLQGNINNQLFQTPCELLNFPKRSFSENMINDHRQPAPTNNNY.

An N-terminal signal peptide occupies residues 1–21 (MVNSQILILFILSLTITIVMC). Gln-22 carries the pyrrolidone carboxylic acid modification. Asn-32 carries the asparagine amide modification. Positions 88–107 (SFSENMINDHRQPAPTNNNY) are excised as a propeptide.

It belongs to the corazonin family. In terms of tissue distribution, in the adult brain, expressed in four neurons of the lateral protocerebrum project axons towards the retrocerebral complex.

It is found in the secreted. In terms of biological role, cardioactive peptide. Corazonin is probably involved in the physiological regulation of the heart beat. The polypeptide is Pro-corazonin (Apis mellifera (Honeybee)).